A 239-amino-acid chain; its full sequence is Uridylate kinase (239 aa).

Position 12-15 (12-15) interacts with ATP; that stretch reads KLSG. Positions 20 to 25 are involved in allosteric activation by GTP; it reads GDQGYG. Position 54 (Gly54) interacts with UMP. 2 residues coordinate ATP: Gly55 and Arg59. UMP-binding positions include Asp74 and 135–142; that span reads TGNPYFTT. Positions 162, 168, and 171 each coordinate ATP.

It belongs to the UMP kinase family. As to quaternary structure, homohexamer.

The protein resides in the cytoplasm. It carries out the reaction UMP + ATP = UDP + ADP. The protein operates within pyrimidine metabolism; CTP biosynthesis via de novo pathway; UDP from UMP (UMPK route): step 1/1. With respect to regulation, allosterically activated by GTP. Inhibited by UTP. Functionally, catalyzes the reversible phosphorylation of UMP to UDP. In Geobacter metallireducens (strain ATCC 53774 / DSM 7210 / GS-15), this protein is Uridylate kinase.